Reading from the N-terminus, the 121-residue chain is Ribosome-binding factor A (121 aa).

This sequence belongs to the RbfA family. As to quaternary structure, monomer. Binds 30S ribosomal subunits, but not 50S ribosomal subunits or 70S ribosomes.

It localises to the cytoplasm. One of several proteins that assist in the late maturation steps of the functional core of the 30S ribosomal subunit. Associates with free 30S ribosomal subunits (but not with 30S subunits that are part of 70S ribosomes or polysomes). Required for efficient processing of 16S rRNA. May interact with the 5'-terminal helix region of 16S rRNA. In Clostridium kluyveri (strain NBRC 12016), this protein is Ribosome-binding factor A.